The chain runs to 624 residues: DNA mismatch repair protein MutL (624 aa).

Residues 355–377 (EESAPERKLPEKTPEPSYSPMKL) form a disordered region. Residues 358 to 368 (APERKLPEKTP) are compositionally biased toward basic and acidic residues.

This sequence belongs to the DNA mismatch repair MutL/HexB family.

In terms of biological role, this protein is involved in the repair of mismatches in DNA. It is required for dam-dependent methyl-directed DNA mismatch repair. May act as a 'molecular matchmaker', a protein that promotes the formation of a stable complex between two or more DNA-binding proteins in an ATP-dependent manner without itself being part of a final effector complex. This is DNA mismatch repair protein MutL from Bacillus velezensis (strain DSM 23117 / BGSC 10A6 / LMG 26770 / FZB42) (Bacillus amyloliquefaciens subsp. plantarum).